A 208-amino-acid chain; its full sequence is Type 4 adapter protein LvgA (208 aa).

In terms of assembly, the T4BSS is a complex nanomachine composed of several subcomplexes. This subunit is part of the Type IV Coupling Complex (T4CC), a subcomplex composed of the DotLMNYZ core and the IcmSW-LvgA adapter subunits, linked by the C-terminal tail of DotL. Interacts with DotL, IcmS and IcmW. Interacts with various effector proteins, including VpdB, SetA, PieA and SidH.

It localises to the cytoplasm. In terms of biological role, component of the Dot/Icm type IVB secretion system (T4BSS), which is used to inject bacterial effector proteins into eukaryotic host cells. Part of a subcomplex which recruits effector proteins and delivers them to the core transmembrane subcomplex. Is a critical subunit for binding a subset of effector proteins. Recognizes more than one type of binding motif. May be a critical factor that confers host specificity. In Legionella pneumophila subsp. pneumophila (strain Philadelphia 1 / ATCC 33152 / DSM 7513), this protein is Type 4 adapter protein LvgA.